Here is a 484-residue protein sequence, read N- to C-terminus: 6-phosphogluconate dehydrogenase, decarboxylating (484 aa).

Residues Gly-11–Gly-16, Asn-34–Thr-36, Val-76–Ala-78, and Asn-104 each bind NADP(+). Substrate-binding positions include Asn-104 and Ser-130–Gly-132. The active-site Proton acceptor is Lys-185. His-188–Asn-189 contributes to the substrate binding site. The active-site Proton donor is the Glu-192. Substrate contacts are provided by Tyr-193, Lys-262, Arg-289, Arg-447, and His-453.

Belongs to the 6-phosphogluconate dehydrogenase family. In terms of assembly, homodimer.

The enzyme catalyses 6-phospho-D-gluconate + NADP(+) = D-ribulose 5-phosphate + CO2 + NADPH. It participates in carbohydrate degradation; pentose phosphate pathway; D-ribulose 5-phosphate from D-glucose 6-phosphate (oxidative stage): step 3/3. Functionally, catalyzes the oxidative decarboxylation of 6-phosphogluconate to ribulose 5-phosphate and CO(2), with concomitant reduction of NADP to NADPH. This is 6-phosphogluconate dehydrogenase, decarboxylating from Aggregatibacter actinomycetemcomitans (Actinobacillus actinomycetemcomitans).